Consider the following 314-residue polypeptide: MTGISIGVVRRPNEADVATIRSLAEAAERADGVAPLPEQVLLHLKRSGDADADADTDAWHFVARRLSPQGSELTGYAFLDKSNAEEGPTAEVVVLPDARRQGVGGALLDALRMKVRRGDKPIRVWSHGALPAAAALAAKRGLEPVRELWVMSRPLADVPPAPTPPDGIRIATFRPGVDDEAWVEVNARAFAHHPEQGSMTVQDLRDRMAEPWFDPEGFFLAWRGAKLAGFHWTKVHDHSAYGDGPVGEVYVVGLDPAEQGHGLGRTLTEVGLRHLHDRGLGEVILYVEADNTPAVAVYTKLGFTRRSADVMYQL.

N-acetyltransferase domains follow at residues 18–156 and 168–314; these read ATIR…RPLA and IRIA…MYQL. E38 serves as a coordination point for 1D-myo-inositol 2-(L-cysteinylamino)-2-deoxy-alpha-D-glucopyranoside. 92–94 contacts acetyl-CoA; it reads VVV. Positions 195, 234, and 248 each coordinate 1D-myo-inositol 2-(L-cysteinylamino)-2-deoxy-alpha-D-glucopyranoside. Acetyl-CoA-binding positions include 252-254 and 259-265; these read VGL and QGHGLGR. Y286 is a 1D-myo-inositol 2-(L-cysteinylamino)-2-deoxy-alpha-D-glucopyranoside binding site.

This sequence belongs to the acetyltransferase family. MshD subfamily. In terms of assembly, monomer.

It carries out the reaction 1D-myo-inositol 2-(L-cysteinylamino)-2-deoxy-alpha-D-glucopyranoside + acetyl-CoA = mycothiol + CoA + H(+). Functionally, catalyzes the transfer of acetyl from acetyl-CoA to desacetylmycothiol (Cys-GlcN-Ins) to form mycothiol. The sequence is that of Mycothiol acetyltransferase from Catenulispora acidiphila (strain DSM 44928 / JCM 14897 / NBRC 102108 / NRRL B-24433 / ID139908).